Reading from the N-terminus, the 348-residue chain is Protein pelota homolog (348 aa).

This sequence belongs to the eukaryotic release factor 1 family. Pelota subfamily. In terms of assembly, monomer. A divalent metal cation serves as cofactor.

It localises to the cytoplasm. In terms of biological role, may function in recognizing stalled ribosomes, interact with stem-loop structures in stalled mRNA molecules, and effect endonucleolytic cleavage of the mRNA. May play a role in the release non-functional ribosomes and degradation of damaged mRNAs. Has endoribonuclease activity. This Methanococcus maripaludis (strain C7 / ATCC BAA-1331) protein is Protein pelota homolog.